The sequence spans 1178 residues: DNA-directed RNA polymerase I subunit 2 (1178 aa).

The C4-type zinc finger occupies 1097–1137; sequence CSLCGSLLTSSVVNVQQKKLIQEIGKLPPGRTPKKVTCYSC.

The protein belongs to the RNA polymerase beta chain family. As to quaternary structure, component of the RNA polymerase I (Pol I) complex consisting of at least 13 subunits.

It is found in the nucleus. The enzyme catalyses RNA(n) + a ribonucleoside 5'-triphosphate = RNA(n+1) + diphosphate. Its function is as follows. DNA-dependent RNA polymerase catalyzes the transcription of DNA into RNA using the four ribonucleoside triphosphates as substrates. Second largest core component of RNA polymerase I which synthesizes ribosomal RNA precursors. Proposed to contribute to the polymerase catalytic activity and forms the polymerase active center together with the largest subunit. Pol I is composed of mobile elements and NRPA2 is part of the core element with the central large cleft and probably a clamp element that moves to open and close the cleft. In terms of biological role, essential for the completion of the three rounds of mitosis in female megaspores required for the development of mature gametophytes. This chain is DNA-directed RNA polymerase I subunit 2, found in Arabidopsis thaliana (Mouse-ear cress).